We begin with the raw amino-acid sequence, 278 residues long: Non-heme chloroperoxidase (278 aa).

An AB hydrolase-1 domain is found at 26–264 (PVVLIHGFPL…GAPHGLLWTH (239 aa)). Active-site residues include S99, D229, and H258.

This sequence belongs to the AB hydrolase superfamily. Bacterial non-heme haloperoxidase / perhydrolase family. Homodimer.

In Kitasatospora aureofaciens (Streptomyces aureofaciens), this protein is Non-heme chloroperoxidase (cpo).